A 209-amino-acid polypeptide reads, in one-letter code: Protease (209 aa).

Catalysis depends on residues H60, D77, and C127.

Belongs to the peptidase C5 family. In terms of assembly, interacts with protease cofactor pVI-C; this interaction is necessary for protease activation.

The protein resides in the virion. The protein localises to the host nucleus. The enzyme catalyses Cleaves proteins of the adenovirus and its host cell at two consensus sites: -Yaa-Xaa-Gly-Gly-|-Xaa- and -Yaa-Xaa-Gly-Xaa-|-Gly- (in which Yaa is Met, Ile or Leu, and Xaa is any amino acid).. With respect to regulation, requires DNA and protease cofactor for maximal activation. Inside nascent virions, becomes partially activated by binding to the viral DNA, allowing it to cleave the cofactor that binds to the protease and fully activates it. Actin, like the viral protease cofactor, seems to act as a cofactor in the cleavage of cytokeratin 18 and of actin itself. Functionally, cleaves viral precursor proteins (pTP, pIIIa, pVI, pVII, pVIII, and pX) inside newly assembled particles giving rise to mature virions. Protease complexed to its cofactor slides along the viral DNA to specifically locate and cleave the viral precursors. Mature virions have a weakened organization compared to the unmature virions, thereby facilitating subsequent uncoating. Without maturation, the particle lacks infectivity and is unable to uncoat. Late in adenovirus infection, in the cytoplasm, may participate in the cytoskeleton destruction. Cleaves host cell cytoskeletal keratins K7 and K18. The polypeptide is Protease (Homo sapiens (Human)).